The following is a 293-amino-acid chain: Undecaprenyl-diphosphatase (293 aa).

The next 8 helical transmembrane spans lie at Ile3–Pro23, Lys43–Phe63, Ala85–Ile105, Leu109–Ala129, Phe178–Gly198, Val203–Glu223, Ile238–Leu258, and Phe269–Val289.

Belongs to the UppP family.

Its subcellular location is the cell inner membrane. It carries out the reaction di-trans,octa-cis-undecaprenyl diphosphate + H2O = di-trans,octa-cis-undecaprenyl phosphate + phosphate + H(+). Its function is as follows. Catalyzes the dephosphorylation of undecaprenyl diphosphate (UPP). Confers resistance to bacitracin. The polypeptide is Undecaprenyl-diphosphatase (Cupriavidus necator (strain ATCC 17699 / DSM 428 / KCTC 22496 / NCIMB 10442 / H16 / Stanier 337) (Ralstonia eutropha)).